The following is a 585-amino-acid chain: Butyrophilin subfamily 3 member A3 (585 aa).

The signal sequence occupies residues 1–29; sequence MKMASSLACLLLNFHVSVFLVQLLTPCSA. 2 consecutive Ig-like V-type domains span residues 30–139 and 145–236; these read QFSV…KALV and ALGS…ASIS. Residues 30–248 are Extracellular-facing; the sequence is QFSVLGPSGP…DPFFTSAQPW (219 aa). Disulfide bonds link Cys-52-Cys-126 and Cys-166-Cys-220. The N-linked (GlcNAc...) asparagine glycan is linked to Asn-115. The chain crosses the membrane as a helical span at residues 249–269; it reads IAALAGTLPISLLLLAGASYF. Topologically, residues 270–585 are cytoplasmic; that stretch reads LWRQQKEKIA…KPQACTEALY (316 aa). Residues 322–518 form the B30.2/SPRY domain; that stretch reads RGEKSLAYHE…LTICPTPKEV (197 aa). The segment at 560-585 is disordered; the sequence is AGAEGVSPSTTTSQNHKPQACTEALY. Polar residues predominate over residues 566-576; that stretch reads SPSTTTSQNHK.

This sequence belongs to the immunoglobulin superfamily. BTN/MOG family.

The protein resides in the membrane. The polypeptide is Butyrophilin subfamily 3 member A3 (BTN3A3) (Pongo abelii (Sumatran orangutan)).